Consider the following 389-residue polypeptide: Succinate--CoA ligase [ADP-forming] subunit beta (389 aa).

The ATP-grasp domain maps to lysine 9–lysine 236. ATP-binding positions include lysine 45, glycine 52–glycine 54, serine 94, and glutamate 99. Mg(2+) contacts are provided by asparagine 191 and aspartate 205. Substrate-binding positions include asparagine 256 and glycine 318–threonine 320.

It belongs to the succinate/malate CoA ligase beta subunit family. In terms of assembly, heterotetramer of two alpha and two beta subunits. Mg(2+) is required as a cofactor.

The catalysed reaction is succinate + ATP + CoA = succinyl-CoA + ADP + phosphate. It carries out the reaction GTP + succinate + CoA = succinyl-CoA + GDP + phosphate. It functions in the pathway carbohydrate metabolism; tricarboxylic acid cycle; succinate from succinyl-CoA (ligase route): step 1/1. In terms of biological role, succinyl-CoA synthetase functions in the citric acid cycle (TCA), coupling the hydrolysis of succinyl-CoA to the synthesis of either ATP or GTP and thus represents the only step of substrate-level phosphorylation in the TCA. The beta subunit provides nucleotide specificity of the enzyme and binds the substrate succinate, while the binding sites for coenzyme A and phosphate are found in the alpha subunit. In Mycobacteroides abscessus (strain ATCC 19977 / DSM 44196 / CCUG 20993 / CIP 104536 / JCM 13569 / NCTC 13031 / TMC 1543 / L948) (Mycobacterium abscessus), this protein is Succinate--CoA ligase [ADP-forming] subunit beta.